We begin with the raw amino-acid sequence, 196 residues long: Interleukin-23 subunit alpha (196 aa).

Residues 1–21 form the signal peptide; the sequence is MLDCRAIILLWLLPWATQGLA.

It belongs to the IL-6 superfamily. Heterodimer with IL12B; disulfide-linked. The heterodimer is known as interleukin IL-23. Interacts with IL23R; this interaction enables recruitment of IL12RB1.

It localises to the secreted. Its function is as follows. Associates with IL12B to form the pro-inflammatory cytokine IL-23 that plays different roles in innate and adaptive immunity. Released by antigen-presenting cells such as dendritic cells or macrophages, binds to a heterodimeric receptor complex composed of IL12RB1 and IL23R to activate JAK2 and TYK2 which then phosphorylate the receptor to form a docking site leading to the phosphorylation of STAT3 and STAT4. This process leads to activation of several pathways including p38 MAPK or NF-kappa-B and promotes the production of pro-inflammatory cytokines such as interleukin-17A/IL17A. In turn, participates in the early and effective intracellular bacterial clearance. Promotes the expansion and survival of T-helper 17 cells, a CD4-positive helper T-cell subset that produces IL-17, as well as other IL-17-producing cells. This Rattus norvegicus (Rat) protein is Interleukin-23 subunit alpha (Il23a).